Reading from the N-terminus, the 696-residue chain is MSAENNQLSGASPPHPPTTPQYSTQNLPSEKEDTEVELDEESLQDESPFSPEGESLEDKEYLEEEEDLEEEEYLGKEEYLKEEEYLGKEEHLEEEEYLEKAGYLEEEEYIEEEEYLGKEGYLEEEEYLGKEEHLEEEEYLGKEGYLEKEDYIEEVDYLGKKAYLEEEEYLGKKSYLEEEKALEKEENLEEEEALEKEENLDGKENLYKKYLKEPKASYSSQTMLLRDARSPDAGPSQVTTFLTVPLTFATPSPVSESATESSELLLTLYRRSQASQTDWCYDRTAVKSLKSKSETEQETTTKLAPEEHVNTKVQQKKEENVLEFASKENFWDGITDESIDKLEVEDLDENFLNSSYQTVFKTIIKEMAAHNELEEDFDIPLTKLLESENRWKLVIMLKKNYEKFKETILRIKRRREAQKLTEMTSFTFHLMSKPTPEKPETEEIQKPQRVVHHRKKLERDKEWIQKKTVVHQGDGKLILYPNKNVYQILFPDGTGQIHYPSGNLAMLILYAKMKKFTYIILEDSLEGRIRALINNSGNATFYDENSDIWLNLSSNLGYYFPKDKRQKAWNWWNLNIHVHAPPVQPISLKINEYIQVQIRSQDKIIFCFTYEQKQICLNLGTRYKFVIPEVLSEMKKKTILEAEPGPTAQKIRVLLGKMNRLLNYATTPDLENFIEAVSISLMDNKYLKKMLSKLWF.

Residues 1-10 (MSAENNQLSG) are compositionally biased toward polar residues. The tract at residues 1-105 (MSAENNQLSG…EYLEKAGYLE (105 aa)) is disordered. Composition is skewed to acidic residues over residues 32 to 44 (EDTE…ESLQ) and 54 to 72 (ESLE…EEEE). Basic and acidic residues predominate over residues 73 to 91 (YLGKEEYLKEEEYLGKEEH).

The protein belongs to the ERICH6 family.

In Homo sapiens (Human), this protein is Glutamate-rich protein 6B (ERICH6B).